Reading from the N-terminus, the 457-residue chain is Serine/threonine-protein phosphatase 2A activator 2 (457 aa).

2 disordered regions span residues 387–407 and 426–457; these read DAHG…GEGQ and AEQE…IPFD. A compositionally biased stretch (basic residues) spans 391–400; the sequence is HIHPAGKPHA.

It belongs to the PTPA-type PPIase family.

It is found in the cytoplasm. The catalysed reaction is [protein]-peptidylproline (omega=180) = [protein]-peptidylproline (omega=0). Its function is as follows. PPIases accelerate the folding of proteins. It catalyzes the cis-trans isomerization of proline imidic peptide bonds in oligopeptides. Acts as a regulatory subunit for PP2A-like phosphatases modulating their activity or substrate specificity, probably by inducing a conformational change in the catalytic subunit, a direct target of the PPIase. Can reactivate inactive phosphatase PP2A-phosphatase methylesterase complexes (PP2Ai) in presence of ATP and Mg(2+) by dissociating the inactive form from the complex. The sequence is that of Serine/threonine-protein phosphatase 2A activator 2 (RRD2) from Mycosarcoma maydis (Corn smut fungus).